We begin with the raw amino-acid sequence, 262 residues long: 1-(5-phosphoribosyl)-5-[(5-phosphoribosylamino)methylideneamino] imidazole-4-carboxamide isomerase (262 aa).

The Proton acceptor role is filled by D8. The active-site Proton donor is D129. A disordered region spans residues 243 to 262; it reads KDNVGQEDHSLPRCEPGPRG.

The protein belongs to the HisA/HisF family.

The protein localises to the cytoplasm. It catalyses the reaction 1-(5-phospho-beta-D-ribosyl)-5-[(5-phospho-beta-D-ribosylamino)methylideneamino]imidazole-4-carboxamide = 5-[(5-phospho-1-deoxy-D-ribulos-1-ylimino)methylamino]-1-(5-phospho-beta-D-ribosyl)imidazole-4-carboxamide. The protein operates within amino-acid biosynthesis; L-histidine biosynthesis; L-histidine from 5-phospho-alpha-D-ribose 1-diphosphate: step 4/9. This is 1-(5-phosphoribosyl)-5-[(5-phosphoribosylamino)methylideneamino] imidazole-4-carboxamide isomerase from Desulforudis audaxviator (strain MP104C).